Consider the following 283-residue polypeptide: 4-diphosphocytidyl-2-C-methyl-D-erythritol kinase (283 aa).

Residue Lys13 is part of the active site. 96–106 (PMGGGIGGGSS) is a binding site for ATP. The active site involves Asp138.

Belongs to the GHMP kinase family. IspE subfamily.

The catalysed reaction is 4-CDP-2-C-methyl-D-erythritol + ATP = 4-CDP-2-C-methyl-D-erythritol 2-phosphate + ADP + H(+). Its pathway is isoprenoid biosynthesis; isopentenyl diphosphate biosynthesis via DXP pathway; isopentenyl diphosphate from 1-deoxy-D-xylulose 5-phosphate: step 3/6. Functionally, catalyzes the phosphorylation of the position 2 hydroxy group of 4-diphosphocytidyl-2C-methyl-D-erythritol. This chain is 4-diphosphocytidyl-2-C-methyl-D-erythritol kinase, found in Pseudomonas fluorescens (strain SBW25).